A 160-amino-acid chain; its full sequence is SsrA-binding protein (160 aa).

The protein belongs to the SmpB family.

The protein localises to the cytoplasm. Functionally, required for rescue of stalled ribosomes mediated by trans-translation. Binds to transfer-messenger RNA (tmRNA), required for stable association of tmRNA with ribosomes. tmRNA and SmpB together mimic tRNA shape, replacing the anticodon stem-loop with SmpB. tmRNA is encoded by the ssrA gene; the 2 termini fold to resemble tRNA(Ala) and it encodes a 'tag peptide', a short internal open reading frame. During trans-translation Ala-aminoacylated tmRNA acts like a tRNA, entering the A-site of stalled ribosomes, displacing the stalled mRNA. The ribosome then switches to translate the ORF on the tmRNA; the nascent peptide is terminated with the 'tag peptide' encoded by the tmRNA and targeted for degradation. The ribosome is freed to recommence translation, which seems to be the essential function of trans-translation. In Escherichia coli O139:H28 (strain E24377A / ETEC), this protein is SsrA-binding protein.